Here is a 238-residue protein sequence, read N- to C-terminus: MILYPAIDLKDGNCVRLLRGDMEAATVFGTDPAAQARAFRDAGAEWLHLVDLNGAFAGKPVNAAAVEAILAAIDLPVQLGGGIRDMATIEGWLDRGLARVILGTVAVEQPELVREAAMAFPGKIAVGIDARGGRVATRGWAEETDVNVVDLAHRFEDAGVAAIIYTDIDRDGAMAGPNIAATEALARAVNVPVIASGGVSSMQDLMALRATGVIAGAISGRALYDGAIDLNAALKALA.

Asp-8 acts as the Proton acceptor in catalysis. The Proton donor role is filled by Asp-129.

Belongs to the HisA/HisF family.

The protein resides in the cytoplasm. The enzyme catalyses 1-(5-phospho-beta-D-ribosyl)-5-[(5-phospho-beta-D-ribosylamino)methylideneamino]imidazole-4-carboxamide = 5-[(5-phospho-1-deoxy-D-ribulos-1-ylimino)methylamino]-1-(5-phospho-beta-D-ribosyl)imidazole-4-carboxamide. Its pathway is amino-acid biosynthesis; L-histidine biosynthesis; L-histidine from 5-phospho-alpha-D-ribose 1-diphosphate: step 4/9. This Paracoccus denitrificans (strain Pd 1222) protein is 1-(5-phosphoribosyl)-5-[(5-phosphoribosylamino)methylideneamino] imidazole-4-carboxamide isomerase.